The sequence spans 108 residues: MDKSKRTFRKSKRSFRRRLPPIGSGDRIDYRNMSLISRFISEQGKILSRRVNRLTLKQQRLITIAIKQARILSSLPFLNNEKQFERTESTPRTTGTRARKKKIGLLLN.

Basic residues-rich tracts occupy residues 1 to 19 (MDKSKRTFRKSKRSFRRRL) and 97 to 108 (RARKKKIGLLLN). Disordered regions lie at residues 1-23 (MDKSKRTFRKSKRSFRRRLPPIG) and 83-108 (QFERTESTPRTTGTRARKKKIGLLLN).

This sequence belongs to the bacterial ribosomal protein bS18 family. As to quaternary structure, part of the 30S ribosomal subunit.

The protein localises to the plastid. Its subcellular location is the chloroplast. This chain is Small ribosomal subunit protein bS18c, found in Illicium oligandrum (Star anise).